Reading from the N-terminus, the 184-residue chain is Ribosome-recycling factor (184 aa).

It belongs to the RRF family.

Its subcellular location is the cytoplasm. Responsible for the release of ribosomes from messenger RNA at the termination of protein biosynthesis. May increase the efficiency of translation by recycling ribosomes from one round of translation to another. The protein is Ribosome-recycling factor of Acinetobacter baumannii (strain AB307-0294).